The following is a 443-amino-acid chain: D-inositol 3-phosphate glycosyltransferase (443 aa).

Residue histidine 30 coordinates 1D-myo-inositol 3-phosphate. Residues 36–37 (QP) and glycine 44 contribute to the UDP-N-acetyl-alpha-D-glucosamine site. Residues 41–46 (DAGGMN), lysine 99, tyrosine 132, threonine 156, and arginine 176 each bind 1D-myo-inositol 3-phosphate. Residues arginine 250, lysine 255, and arginine 316 each coordinate UDP-N-acetyl-alpha-D-glucosamine. Residues phenylalanine 325, arginine 326, and cysteine 328 each contribute to the Mg(2+) site. UDP-N-acetyl-alpha-D-glucosamine-binding residues include glutamate 338 and glutamate 346. Residue threonine 352 coordinates Mg(2+).

This sequence belongs to the glycosyltransferase group 1 family. MshA subfamily. In terms of assembly, homodimer.

The catalysed reaction is 1D-myo-inositol 3-phosphate + UDP-N-acetyl-alpha-D-glucosamine = 1D-myo-inositol 2-acetamido-2-deoxy-alpha-D-glucopyranoside 3-phosphate + UDP + H(+). Catalyzes the transfer of a N-acetyl-glucosamine moiety to 1D-myo-inositol 3-phosphate to produce 1D-myo-inositol 2-acetamido-2-deoxy-glucopyranoside 3-phosphate in the mycothiol biosynthesis pathway. The sequence is that of D-inositol 3-phosphate glycosyltransferase from Stackebrandtia nassauensis (strain DSM 44728 / CIP 108903 / NRRL B-16338 / NBRC 102104 / LLR-40K-21).